The following is a 301-amino-acid chain: Homeobox protein Nkx-2.6 (301 aa).

The interval 22–135 (ERSCPAASPH…QPKARQRRKP (114 aa)) is disordered. The segment at residues 132–191 (RRKPRVLFSQAQVLALERRFKQQRYLSAPEREHLASALQLTSTQVKIWFQNRRYKCKRQR) is a DNA-binding region (homeobox).

The protein belongs to the NK-2 homeobox family.

The protein localises to the nucleus. In terms of biological role, acts as a transcriptional activator. In conjunction with NKX2-5, may play a role in both pharyngeal and cardiac embryonic development. The sequence is that of Homeobox protein Nkx-2.6 (NKX2-6) from Homo sapiens (Human).